The following is a 582-amino-acid chain: Protein NUCLEAR FUSION DEFECTIVE 4 (582 aa).

Positions 1 to 20 (MRPRIRDVSDKLRPNRASFD) are disordered. The next 8 membrane-spanning stretches (helical) occupy residues 46–66 (VLVA…FSAY), 100–120 (IALG…MGFV), 132–152 (IITL…LSIC), 172–192 (LALS…SLAF), 202–222 (LYLL…LYPV), 243–263 (VFTI…LSSS), 270–290 (LNFI…LLVY), and 358–378 (LEFW…LVYS). A glycan (N-linked (GlcNAc...) asparagine) is linked at asparagine 391. 5 consecutive transmembrane segments (helical) span residues 395–412 (LVTI…LSAA), 425–445 (TGWF…LAVS), 458–478 (LIGL…SDLF), 489–509 (ILIT…ASIY), and 536–556 (TFVF…SLYI).

The protein resides in the membrane. Required for karyogamy during female gametophyte development, when the two polar nuclei fuse to form the diploid central cell nucleus. The polypeptide is Protein NUCLEAR FUSION DEFECTIVE 4 (Arabidopsis thaliana (Mouse-ear cress)).